A 902-amino-acid chain; its full sequence is Gamma-tubulin complex component 2 (902 aa).

The residue at position 83 (Tyr-83) is a Phosphotyrosine. Residues 874-902 are disordered; sequence AERSQKATPQVPVLRGPPAPAPRVAVTAQ.

Belongs to the TUBGCP family. Component of the gamma-tubulin ring complex (gTuRC) consisting of TUBGCP2, TUBGCP3, TUBGCP4, TUBGCP5 and TUBGCP6 and gamma-tubulin TUBG1 or TUBG2. TUBGCP2, TUBGCP3, TUBGCP4, TUBGCP5 and TUBGCP6 assemble in a 5:5:2:1:1 stoichiometry; each is associated with a gamma-tubulin, thereby arranging 14 gamma-tubulins in a helical manner. Gamma-tubulin at the first position is blocked by TUBGCP3 at the last position, allowing 13 protafilaments to grow into a microtubule. The gTuRC (via TUBGCP3 and TUBGCP6) interacts with ACTB and MZT1; the interactions form a luminal bridge that stabilizes the initial structure during complex assembly. The gTuRC (via TUBGCP2) interacts with MZT2A/MZT2B and CDK5RAP2 (via CM1 motif); the interactions play a role in gTuRC activation. Interacts with ATF5; the ATF5:PCNT:polyglutamylated tubulin (PGT) tripartite unites the mother centriole and the pericentriolar material (PCM) in the centrosome. Ubiquitously expressed.

It is found in the cytoplasm. Its subcellular location is the cytoskeleton. It localises to the microtubule organizing center. The protein resides in the centrosome. Its function is as follows. Component of the gamma-tubulin ring complex (gTuRC) which mediates microtubule nucleation. The gTuRC regulates the minus-end nucleation of alpha-beta tubulin heterodimers that grow into microtubule protafilaments, a critical step in centrosome duplication and spindle formation. Plays a role in neuronal migration. The polypeptide is Gamma-tubulin complex component 2 (TUBGCP2) (Homo sapiens (Human)).